A 1499-amino-acid chain; its full sequence is Rho GTPase-activating protein 35 (1499 aa).

The interval 1–266 (MMMARKQDVR…IPYFEALKQQ (266 aa)) is has GTPase activity, required for proper localization. GTP contacts are provided by residues Lys-28, 33-37 (IGKSC), Leu-52, Ser-56, 95-97 (EQT), 201-203 (KCD), and 229-231 (SAR). 4 consecutive FF domains span residues 270 to 327 (IATA…HIHR), 368 to 422 (KLLE…HLEK), 429 to 483 (RAEM…HQKQ), and 485 to 550 (IDRA…HIHF). Tyr-308 carries the phosphotyrosine modification. Position 589 is a phosphoserine (Ser-589). A pG1 pseudoGTPase domain is found at 592 to 767 (DLNIDRINLV…LLDSKRNLNL (176 aa)). Phosphoserine is present on residues Ser-770 and Ser-773. A pG2 pseudoGTPase domain is found at 783–947 (RIVMCLMCGD…FKDVVEKKNI (165 aa)). 4 positions are modified to phosphoserine: Ser-970, Ser-975, Ser-985, and Ser-1072. Phosphotyrosine is present on Tyr-1087. Tyr-1105 carries the post-translational modification Phosphotyrosine; by ABL2 and PTK6. The span at 1124–1141 (KAQSNGSGNGSDSEMDTS) shows a compositional bias: polar residues. The tract at residues 1124–1148 (KAQSNGSGNGSDSEMDTSSLERGRK) is disordered. 6 positions are modified to phosphoserine: Ser-1134, Ser-1142, Ser-1150, Ser-1176, Ser-1179, and Ser-1221. The tract at residues 1177–1207 (VGSDDELGPIRKKEEDQASQGYKGDNAVIPY) is disordered. The interval 1213–1236 (PRRRNILRSLRRNTKKPKPKPRPS) is required for phospholipid binding and regulation of the substrate preference. Thr-1226 is subject to Phosphothreonine. A Phosphoserine modification is found at Ser-1236. Residues 1249–1436 (VPLTTVVTPE…LFIQQCPFFF (188 aa)) form the Rho-GAP domain. Residues 1446–1499 (GAAPGSPSAMAPTVPFLTSTPATSQPSPPQSPPPTPQSPMQPLLSSQLQAEHTL) are disordered. Residues 1448-1470 (APGSPSAMAPTVPFLTSTPATSQ) are compositionally biased toward low complexity. Over residues 1471 to 1484 (PSPPQSPPPTPQSP) the composition is skewed to pro residues. Ser-1472 and Ser-1476 each carry phosphoserine. Thr-1480 carries the phosphothreonine modification. Ser-1483 carries the phosphoserine modification. Low complexity predominate over residues 1485-1499 (MQPLLSSQLQAEHTL).

Interacts with the general transcription factor GTF2I, the interaction sequesters GTF2I in the cytoplasm. Interacts with RASA1. In terms of processing, phosphorylation of Tyr-1105 by PTK6 promotes the association with RASA1, inactivating RHOA while activating RAS. Phosphorylation at Tyr-308 by PDGFRA inhibits binding to GTF2I. Phosphorylated by PRKCA at Ser-1221 and Thr-1226, induces relocalization from the cytoplasm to regions of plasma membrane ruffling and prevents the binding and substrate specificity regulation by phospholipids. In brain, phosphorylated by FYN and SRC. During focal adhesion formation, phosphorylated by MAPK1 and MAPK3 at the C-terminal region, probably at Ser-1451, Ser-1476, Thr-1480 and Ser-1483. Phosphorylation by MAPK1 and MAPK3 inhibits GAP function and localizes ARGHAP35 away from newly forming focal adhesions and stress fibers in cells spreading on fibronectin. Phosphorylation at Ser-1476 and Thr-1480 by GSK3B requires priming by MAPK and inhibits RhoGAP activity and modulates polarized cell migration. As to expression, expressed in the developing kidneys. Expressed in all regions of the mature nervous system (at protein level). Detected in neutrophils (at protein level).

Its subcellular location is the cytoplasm. It localises to the cytoskeleton. It is found in the cilium basal body. The protein resides in the nucleus. The protein localises to the cell membrane. Its function is as follows. Rho GTPase-activating protein (GAP). Binds several acidic phospholipids which inhibits the Rho GAP activity to promote the Rac GAP activity. This binding is inhibited by phosphorylation by PRKCA. Involved in cell differentiation as well as cell adhesion and migration, plays an important role in retinal tissue morphogenesis, neural tube fusion, midline fusion of the cerebral hemispheres and mammary gland branching morphogenesis. Transduces signals from p21-ras to the nucleus, acting via the ras GTPase-activating protein (GAP). Transduces SRC-dependent signals from cell-surface adhesion molecules, such as laminin, to promote neurite outgrowth. Regulates axon outgrowth, guidance and fasciculation. Modulates Rho GTPase-dependent F-actin polymerization, organization and assembly, is involved in polarized cell migration and in the positive regulation of ciliogenesis and cilia elongation. During mammary gland development, is required in both the epithelial and stromal compartments for ductal outgrowth. Represses transcription of the glucocorticoid receptor by binding to the cis-acting regulatory sequence 5'-GAGAAAAGAAACTGGAGAAACTC-3'; this function is however unclear and would need additional experimental evidences. This Mus musculus (Mouse) protein is Rho GTPase-activating protein 35.